Here is a 135-residue protein sequence, read N- to C-terminus: Large ribosomal subunit protein mL41 (135 aa).

The transit peptide at 1–13 (MGVLSALARGFVR) directs the protein to the mitochondrion.

This sequence belongs to the mitochondrion-specific ribosomal protein mL41 family. In terms of assembly, component of the mitochondrial ribosome large subunit (39S) which comprises a 16S rRNA and about 50 distinct proteins.

It localises to the mitochondrion. In terms of biological role, component of the mitochondrial ribosome large subunit. Also involved in apoptosis and cell cycle. The chain is Large ribosomal subunit protein mL41 (mrpl41) from Danio rerio (Zebrafish).